The primary structure comprises 154 residues: 17 kDa A-type inclusion protein (154 aa).

Residues 17–85 (QKDCSDKLDR…YKRELERDRY (69 aa)) are a coiled coil. The disordered stretch occupies residues 88–154 (SRYLTSSSDP…DVEPEHPPAF (67 aa)).

The chain is 17 kDa A-type inclusion protein from Bos taurus (Bovine).